The following is a 2206-amino-acid chain: Genome polyprotein (2206 aa).

Residue Gly2 is the site of N-myristoyl glycine; by host attachment. The Cytoplasmic portion of the chain corresponds to 2–1517 (GAQVSSQKVG…NINRAMTILQ (1516 aa)). Amphipathic alpha-helix stretches follow at residues 579 to 599 (GIED…LPKQ) and 579 to 603 (GIED…QDSL). Residues His898 and Asp916 each act as for protease 2A activity in the active site. Residues Cys933 and Cys935 each coordinate Zn(2+). Cys987 serves as the catalytic For protease 2A activity. Residues Cys993 and His995 each contribute to the Zn(2+) site. The interval 1125–1197 (GDSWLKKFTE…HQSCPSQEHQ (73 aa)) is membrane-binding. An oligomerization region spans residues 1125–1263 (GDSWLKKFTE…SPGTGKSVAT (139 aa)). Residues 1146–1150 (SNKIS) form an RNA-binding region. The SF3 helicase domain maps to 1229-1385 (EHTINNYIQF…GEYSRDGKLN (157 aa)). 1253-1260 (GSPGTGKS) is a binding site for ATP. Zn(2+)-binding residues include Cys1393, Cys1396, Cys1405, and Cys1410. The C4-type zinc-finger motif lies at 1393–1410 (CKDCHQPANFKRCCPLVC). Positions 1437–1444 (ERNRRSNI) are RNA-binding. An oligomerization region spans residues 1448 to 1453 (MEALFQ). An intramembrane segment occupies 1518–1533 (AVTTFAAVAGVVYVMY). Residues 1534-2206 (KLFAGHQGAY…TLYRRWLDSF (673 aa)) lie on the Cytoplasmic side of the membrane. Tyr1543 is subject to O-(5'-phospho-RNA)-tyrosine. The 179-residue stretch at 1563-1741 (GPGFDYAVAM…FAAALKRSYF (179 aa)) folds into the Peptidase C3 domain. Active-site for protease 3C activity residues include His1602, Glu1633, and Cys1709. The RdRp catalytic domain maps to 1972–2087 (EKLFAFDYTG…SYPHEVDASL (116 aa)). Positions 1978 and 2073 each coordinate Mg(2+).

It belongs to the picornaviruses polyprotein family. In terms of assembly, interacts with capsid protein VP1 and capsid protein VP3 to form heterotrimeric protomers. As to quaternary structure, interacts with capsid protein VP0, and capsid protein VP3 to form heterotrimeric protomers. Interacts with human PVR. Five protomers subsequently associate to form pentamers which serve as building blocks for the capsid. Interacts with capsid protein VP2, capsid protein VP3 and capsid protein VP4 following cleavage of capsid protein VP0. Interacts with capsid protein VP1 and capsid protein VP3 in the mature capsid. In terms of assembly, interacts with capsid protein VP0 and capsid protein VP1 to form heterotrimeric protomers. Five protomers subsequently associate to form pentamers which serve as building blocks for the capsid. Interacts with capsid protein VP4 in the mature capsid. Interacts with protein 2C; this interaction may be important for virion morphogenesis. As to quaternary structure, interacts with capsid protein VP1 and capsid protein VP3. Homodimer. In terms of assembly, homohexamer; forms a hexameric ring structure with 6-fold symmetry characteristic of AAA+ ATPases. Interacts (via N-terminus) with host RTN3 (via reticulon domain); this interaction is important for viral replication. Interacts with capsid protein VP3; this interaction may be important for virion morphogenesis. As to quaternary structure, interacts with protein 3CD. Homodimer. Interacts with host GBF1. Interacts (via GOLD domain) with host ACBD3 (via GOLD domain); this interaction allows the formation of a viral protein 3A/ACBD3 heterotetramer with a 2:2 stoichiometry, which will stimulate the recruitment of host PI4KB in order to synthesize PI4P at the viral RNA replication sites. In terms of assembly, interacts with RNA-directed RNA polymerase. As to quaternary structure, interacts with protein 3AB and with RNA-directed RNA polymerase. Interacts with Viral protein genome-linked and with protein 3CD. Mg(2+) serves as cofactor. Specific enzymatic cleavages in vivo by the viral proteases yield processing intermediates and the mature proteins. Post-translationally, myristoylation is required for the formation of pentamers during virus assembly. Further assembly of 12 pentamers and a molecule of genomic RNA generates the provirion. In terms of processing, during virion maturation, immature virions are rendered infectious following cleavage of VP0 into VP4 and VP2. This maturation seems to be an autocatalytic event triggered by the presence of RNA in the capsid and it is followed by a conformational change infectious virion. Myristoylation is required during RNA encapsidation and formation of the mature virus particle. Post-translationally, VPg is uridylylated by the polymerase into VPg-pUpU. This acts as a nucleotide-peptide primer for the genomic RNA replication.

Its subcellular location is the virion. It localises to the host cytoplasm. It is found in the host cytoplasmic vesicle membrane. The protein resides in the host nucleus. It carries out the reaction a ribonucleoside 5'-triphosphate + H2O = a ribonucleoside 5'-diphosphate + phosphate + H(+). The catalysed reaction is Selective cleavage of Tyr-|-Gly bond in the picornavirus polyprotein.. The enzyme catalyses RNA(n) + a ribonucleoside 5'-triphosphate = RNA(n+1) + diphosphate. It catalyses the reaction Selective cleavage of Gln-|-Gly bond in the poliovirus polyprotein. In other picornavirus reactions Glu may be substituted for Gln, and Ser or Thr for Gly.. Replication or transcription is subject to high level of random mutations by the nucleotide analog ribavirin. In terms of biological role, forms an icosahedral capsid of pseudo T=3 symmetry with capsid proteins VP2 and VP3. The capsid is 300 Angstroms in diameter, composed of 60 copies of each capsid protein and enclosing the viral positive strand RNA genome. Capsid protein VP1 mainly forms the vertices of the capsid. Capsid protein VP1 interacts with host cell receptor PVR to provide virion attachment to target host cells. This attachment induces virion internalization predominantly through clathrin- and caveolin-independent endocytosis in Hela cells and through caveolin-mediated endocytosis in brain microvascular endothelial cells. Tyrosine kinases are probably involved in the entry process. Virus binding to PVR induces increased junctional permeability and rearrangement of junctional proteins. Modulation of endothelial tight junctions, as well as cytolytic infection of endothelial cells themselves, may result in loss of endothelial integrity which may help the virus to reach the CNS. After binding to its receptor, the capsid undergoes conformational changes. Capsid protein VP1 N-terminus (that contains an amphipathic alpha-helix) and capsid protein VP4 are externalized. Together, they shape a pore in the host membrane through which viral genome is translocated to host cell cytoplasm. Its function is as follows. Forms an icosahedral capsid of pseudo T=3 symmetry with capsid proteins VP2 and VP3. The capsid is 300 Angstroms in diameter, composed of 60 copies of each capsid protein and enclosing the viral positive strand RNA genome. Functionally, lies on the inner surface of the capsid shell. After binding to the host receptor, the capsid undergoes conformational changes. Capsid protein VP4 is released, Capsid protein VP1 N-terminus is externalized, and together, they shape a pore in the host membrane through which the viral genome is translocated into the host cell cytoplasm. Component of immature procapsids, which is cleaved into capsid proteins VP4 and VP2 after maturation. Allows the capsid to remain inactive before the maturation step. In terms of biological role, cysteine protease that cleaves viral polyprotein and specific host proteins. It is responsible for the autocatalytic cleavage between the P1 and P2 regions, which is the first cleavage occurring in the polyprotein. Also cleaves the host translation initiation factor EIF4G1, in order to shut down the capped cellular mRNA translation. Inhibits the host nucleus-cytoplasm protein and RNA trafficking by cleaving host members of the nuclear pores including NUP98, NUP62 and NUP153. Counteracts stress granule formation probably by antagonizing its assembly or promoting its dissassembly. Cleaves and inhibits host IFIH1/MDA5, thereby inhibiting the type-I IFN production and the establishment of the antiviral state. Cleaves and inhibits host MAVS, thereby inhibiting the type-I IFN production and the establishment of the antiviral state. Its function is as follows. Plays an essential role in the virus replication cycle by acting as a viroporin. Creates a pore in the host endoplasmic reticulum and as a consequence releases Ca2+ in the cytoplasm of infected cell. In turn, high levels of cytoplasmic calcium may trigger membrane trafficking and transport of viral ER-associated proteins to viroplasms, sites of viral genome replication. Functionally, induces and associates with structural rearrangements of intracellular membranes. Displays RNA-binding, nucleotide binding and NTPase activities. May play a role in virion morphogenesis and viral RNA encapsidation by interacting with the capsid protein VP3. Localizes the viral replication complex to the surface of membranous vesicles. Together with protein 3CD binds the Cis-Active RNA Element (CRE) which is involved in RNA synthesis initiation. Acts as a cofactor to stimulate the activity of 3D polymerase, maybe through a nucleid acid chaperone activity. In terms of biological role, localizes the viral replication complex to the surface of membranous vesicles. It inhibits host cell endoplasmic reticulum-to-Golgi apparatus transport and causes the disassembly of the Golgi complex, possibly through GBF1 interaction. This would result in depletion of MHC, trail receptors and IFN receptors at the host cell surface. Plays an essential role in viral RNA replication by recruiting ACBD3 and PI4KB at the viral replication sites, thereby allowing the formation of the rearranged membranous structures where viral replication takes place. Its function is as follows. Acts as a primer for viral RNA replication and remains covalently bound to viral genomic RNA. VPg is uridylylated prior to priming replication into VPg-pUpU. The oriI viral genomic sequence may act as a template for this. The VPg-pUpU is then used as primer on the genomic RNA poly(A) by the RNA-dependent RNA polymerase to replicate the viral genome. During genome replication, the VPg-RNA linkage is removed by the host TDP2, thereby accelerating replication. During the late stage of the replication cycle, host TDP2 is excluded from sites of viral RNA synthesis and encapsidation, allowing for the generation of progeny virions. Functionally, involved in the viral replication complex and viral polypeptide maturation. It exhibits protease activity with a specificity and catalytic efficiency that is different from protease 3C. Protein 3CD lacks polymerase activity. Protein 3CD binds to the 5'UTR of the viral genome. Major viral protease that mediates proteolytic processing of the polyprotein. Cleaves host EIF5B, contributing to host translation shutoff. Also cleaves host PABPC1, contributing to host translation shutoff. Cleaves host RIGI and thus contributes to the inhibition of type I interferon production. Cleaves host NLRP1, triggers host N-glycine-mediated degradation of the autoinhibitory NLRP1 N-terminal fragment. Inhibits the integrated stress response (ISR) in the infected cell by cleaving host G3BP1. Stress granule formation is thus inhibited, which allows protein synthesis and viral replication. In terms of biological role, replicates the viral genomic RNA on the surface of intracellular membranes. May form linear arrays of subunits that propagate along a strong head-to-tail interaction called interface-I. Covalently attaches UMP to a tyrosine of VPg, which is used to prime RNA synthesis. The positive stranded RNA genome is first replicated at virus induced membranous vesicles, creating a dsRNA genomic replication form. This dsRNA is then used as template to synthesize positive stranded RNA genomes. ss(+)RNA genomes are either translated, replicated or encapsidated. The protein is Genome polyprotein of Poliovirus type 3 (strains P3/Leon/37 and P3/Leon 12A[1]B).